We begin with the raw amino-acid sequence, 300 residues long: NAD kinase (300 aa).

Asp75 functions as the Proton acceptor in the catalytic mechanism. Residues 75 to 76 (DG), 149 to 150 (ND), Arg177, Asp179, 190 to 195 (TAYALS), Ala214, and Gln248 contribute to the NAD(+) site.

The protein belongs to the NAD kinase family. A divalent metal cation is required as a cofactor.

The protein localises to the cytoplasm. The catalysed reaction is NAD(+) + ATP = ADP + NADP(+) + H(+). Functionally, involved in the regulation of the intracellular balance of NAD and NADP, and is a key enzyme in the biosynthesis of NADP. Catalyzes specifically the phosphorylation on 2'-hydroxyl of the adenosine moiety of NAD to yield NADP. The polypeptide is NAD kinase (Burkholderia cenocepacia (strain HI2424)).